We begin with the raw amino-acid sequence, 312 residues long: MAATAAVSGVLRRLGWRLLQLRCLPVARCQSPLMPRAFHTAVGFRSSEEQRQQPPHSSQQHSETQGPEFSRPPPRYTDQSGEEEEDYESEEQIQHRILTAALEFVPDHGWTAEAIAEGAQSLGLSSAAASMFGSDGSELILHFVTQCNARLNHVLEEEQKLVQLGQAEKRKTDQFLRDAVETRLRMLIPYIEHWPRALSILLLPQNIPPSLSLLTSMVDDMWHYAGDQSTDFNWYTRRAVLAGIYNTTELVMMQDSSPDFEDTWRFLDNRINDAMNMGHTAKQVKSTGEALVQGLMGAAVTLKNLTGLNQRR.

Residues 1 to 45 (MAATAAVSGVLRRLGWRLLQLRCLPVARCQSPLMPRAFHTAVGFR) constitute a mitochondrion transit peptide. The SIFI-degron signature appears at 17–32 (RLLQLRCLPVARCQSP). Residues 43–92 (GFRSSEEQRQQPPHSSQQHSETQGPEFSRPPPRYTDQSGEEEEDYESEEQ) are disordered. Residues 52–63 (QQPPHSSQQHSE) show a composition bias toward low complexity. The residue at position 80 (serine 80) is a Phosphoserine. Residues 80–91 (SGEEEEDYESEE) are compositionally biased toward acidic residues. Position 169 is an N6-acetyllysine (lysine 169). Position 238 (arginine 238) interacts with a 1,2-diacylglycero-3-phosphoethanolamine.

Belongs to the COQ9 family. As to quaternary structure, homodimer. Heterodimer; two heterodimers of COQ7:COQ9 come together on the same side of the lipid pseudo-bilayer and form a curved tetramer with a hydrophobic surface suitable for membrane interaction. These two tetramers assemble into a soluble octamer with a pseudo-bilayer of lipids captured within. Interacts with COQ7; this interaction allows ubiquinone (CoQ) isoprene intermediates presentation to COQ7 and facilitates the COQ7-mediated hydroxylase step. Post-translationally, in response to mitochondrial stress, the precursor protein is ubiquitinated by the SIFI complex in the cytoplasm before mitochondrial import, leading to its degradation. Within the SIFI complex, UBR4 initiates ubiquitin chain that are further elongated or branched by KCMF1.

It is found in the mitochondrion. It participates in cofactor biosynthesis; ubiquinone biosynthesis. Membrane-associated protein that warps the membrane surface to access and bind aromatic isoprenes with high specificity, including ubiquinone (CoQ) isoprene intermediates and presents them directly to COQ7, therefore facilitating the COQ7-mediated hydroxylase step. Participates in the biosynthesis of coenzyme Q, also named ubiquinone, an essential lipid-soluble electron transporter for aerobic cellular respiration. The protein is Ubiquinone biosynthesis protein COQ9, mitochondrial of Rattus norvegicus (Rat).